A 156-amino-acid polypeptide reads, in one-letter code: WASQVSENRPVCKAIIQGKQFEGLVDTEADVSIIALNQWPKNWPKQKAVTGLVGIGTASEVYQSTEILHCLGPDNQESTVQPMITSIPLNLWGQDLLQQWGAEITMPAPLYSPTSQKIMTKMGYIPGKGLGKNEDGIKVPVEAKINQKREGIGYPF.

A Peptidase A2 domain is found at 21-96 (FEGLVDTEAD…IPLNLWGQDL (76 aa)). Residue Asp-26 is part of the active site. One can recognise a G-patch domain in the interval 111-156 (YSPTSQKIMTKMGYIPGKGLGKNEDGIKVPVEAKINQKREGIGYPF).

Belongs to the peptidase A2 family. HERV class-II K(HML-2) subfamily. In terms of assembly, active as a homodimer. Post-translationally, autoproteolytically processed at the N-terminus. Expected C-terminal autoprocessing not detected. The sequence shown is that of the processed Pro protein.

It carries out the reaction Processing at the authentic HIV-1 PR recognition site and release of the mature p17 matrix and the p24 capsid protein, as a result of the cleavage of the -SQNY-|-PIVQ- cleavage site.. Retroviral proteases have roles in the processing of the primary translation products and the maturation of the viral particle. Endogenous Pro proteins may have kept, lost or modified their original function during evolution. The chain is Endogenous retrovirus group K member 104 Pro protein (HERV-K104) from Homo sapiens (Human).